Here is a 489-residue protein sequence, read N- to C-terminus: Mitochondrial-processing peptidase subunit beta (489 aa).

The N-terminal 45 residues, 1-45 (MAAAAVSRTLLPVAGRRLWGFTRRLPLRAAAAQPLYFGGDRLRST), are a transit peptide targeting the mitochondrion. His101 contributes to the Zn(2+) binding site. The Proton acceptor role is filled by Glu104. The Zn(2+) site is built by His105 and Glu181.

The protein belongs to the peptidase M16 family. As to quaternary structure, heterodimer of PMPCA (alpha) and PMPCB (beta) subunits, forming the mitochondrial processing protease (MPP) in which PMPCA is involved in substrate recognition and binding and PMPCB is the catalytic subunit. It depends on Zn(2+) as a cofactor.

The protein localises to the mitochondrion matrix. It carries out the reaction Release of N-terminal transit peptides from precursor proteins imported into the mitochondrion, typically with Arg in position P2.. With respect to regulation, binding to PMPCA is required for catalytic activity. Functionally, catalytic subunit of the essential mitochondrial processing protease (MPP), which cleaves the mitochondrial sequence off newly imported precursors proteins. Preferentially, cleaves after an arginine at position P2. Required for PINK1 turnover by coupling PINK1 mitochondrial import and cleavage, which results in subsequent PINK1 proteolysis. The sequence is that of Mitochondrial-processing peptidase subunit beta (Pmpcb) from Rattus norvegicus (Rat).